Consider the following 516-residue polypeptide: MASLMEVQVPLLGMGTTMGALALALVVVVVVHVAVNAFGRRRLPPSPASLPVIGHLHLLRPPVHRTFHELAARLGPLMHVRLGSTHCVVASSAEVAAELIRSHEAKISERPLTAVARQFAYESAGFAFAPYSPHWRFMKRLCMSELLGPRTVEQLRPVRRAGLVSLLRHVLSQPEAEAVDLTRELIRMSNTSIIRMAASTVPSSVTEEAQELVKVVAELVGAFNADDYIALCRGWDLQGLGRRAADVHKRFDALLEEMIRHKEEARMRKKTDTDVGSKDLLDILLDKAEDGAAEVKLTRDNIKAFIIDVVTAGSDTSAAMVEWMVAELMNHPEALRKVREEIEAVVGRDRIAGEGDLPRLPYLQAAYKETLRLRPAAPIAHRQSTEEIQIRGFRVPAQTAVFINVWAIGRDPAYWEEPLEFRPERFLAGGGGEGVEPRGQHFQFMPFGSGRRGCPGMGLALQSVPAVVAALLQCFDWQCMDNKLIDMEEADGLVCARKHRLLLHAHPRLHPFPPLL.

A helical membrane pass occupies residues 11–31 (LLGMGTTMGALALALVVVVVV). Residue cysteine 454 coordinates heme.

This sequence belongs to the cytochrome P450 family. Heme is required as a cofactor.

Its subcellular location is the membrane. The enzyme catalyses a flavanone + reduced [NADPH--hemoprotein reductase] + O2 = a flavone + oxidized [NADPH--hemoprotein reductase] + 2 H2O + H(+). The protein operates within secondary metabolite biosynthesis; flavonoid biosynthesis. Functionally, functions as a flavone synthase II (FNSII) that catalyzes the direct conversion of flavanones to flavones. In vitro, can convert naringenin and eriodictyol to apigenin and luteolin, respectively. Acts as a key branch point enzyme that channels flavanones to the biosynthesis of soluble tricin O-linked conjugates. This is Cytochrome P450 93G1 from Oryza sativa subsp. japonica (Rice).